A 232-amino-acid polypeptide reads, in one-letter code: Cytidylate kinase (232 aa).

G15–T23 contributes to the ATP binding site. The tract at residues K164–A192 is disordered. The span at E178 to R189 shows a compositional bias: basic and acidic residues.

This sequence belongs to the cytidylate kinase family. Type 1 subfamily.

The protein localises to the cytoplasm. The enzyme catalyses CMP + ATP = CDP + ADP. It catalyses the reaction dCMP + ATP = dCDP + ADP. This Solibacter usitatus (strain Ellin6076) protein is Cytidylate kinase.